We begin with the raw amino-acid sequence, 303 residues long: Oxygen-dependent coproporphyrinogen-III oxidase (303 aa).

S93 lines the substrate pocket. H97 and H107 together coordinate a divalent metal cation. Catalysis depends on H107, which acts as the Proton donor. 109–111 (NVR) contributes to the substrate binding site. A divalent metal cation contacts are provided by H149 and H179. The segment at 244 to 279 (YVEFNLVFDRGTLFGLQSGGRTESILLSMPPLAQWR) is important for dimerization. A substrate-binding site is contributed by 262 to 264 (GGR).

This sequence belongs to the aerobic coproporphyrinogen-III oxidase family. Homodimer. Requires a divalent metal cation as cofactor.

Its subcellular location is the cytoplasm. The enzyme catalyses coproporphyrinogen III + O2 + 2 H(+) = protoporphyrinogen IX + 2 CO2 + 2 H2O. Its pathway is porphyrin-containing compound metabolism; protoporphyrin-IX biosynthesis; protoporphyrinogen-IX from coproporphyrinogen-III (O2 route): step 1/1. Its function is as follows. Involved in the heme biosynthesis. Catalyzes the aerobic oxidative decarboxylation of propionate groups of rings A and B of coproporphyrinogen-III to yield the vinyl groups in protoporphyrinogen-IX. The chain is Oxygen-dependent coproporphyrinogen-III oxidase from Bordetella pertussis (strain Tohama I / ATCC BAA-589 / NCTC 13251).